Reading from the N-terminus, the 338-residue chain is MRILGIETSCDETGVAIYDDEKGLLAHQLYSQVKLHADYGGVVPELASRDHVKKTIPLIQAALNDAGMTKDDIDGIAYTAGPGLVGALLVGSTIGRSIAYAWDVPAIPVHHMEGHLLAPMLEDNPPEFPFVALLVSGGHTLMVEVKGIGDYQILGESVDDAAGEAFDKTAKLMGLDYPGGPRLSKLAEAGVKGRFKFPRPMTDRPGLDFSFSGLKTFAANTIRANDDDEQTRADIAFAFQEAVADTLAIKCRRALKQTGMKRLVMAGGVSANTYLRQELEAMMKKIGGEVFYPRTEFCTDNGAMIAYAGMQRLKNGETTDLAVQAKPRWPIDQLAPIK.

His-111 and His-115 together coordinate Fe cation. Substrate contacts are provided by residues 134-138, Asp-167, Gly-180, and Asn-272; that span reads LVSGG. Asp-300 contacts Fe cation.

This sequence belongs to the KAE1 / TsaD family. Fe(2+) is required as a cofactor.

It localises to the cytoplasm. The enzyme catalyses L-threonylcarbamoyladenylate + adenosine(37) in tRNA = N(6)-L-threonylcarbamoyladenosine(37) in tRNA + AMP + H(+). Functionally, required for the formation of a threonylcarbamoyl group on adenosine at position 37 (t(6)A37) in tRNAs that read codons beginning with adenine. Is involved in the transfer of the threonylcarbamoyl moiety of threonylcarbamoyl-AMP (TC-AMP) to the N6 group of A37, together with TsaE and TsaB. TsaD likely plays a direct catalytic role in this reaction. The sequence is that of tRNA N6-adenosine threonylcarbamoyltransferase from Aliivibrio salmonicida (strain LFI1238) (Vibrio salmonicida (strain LFI1238)).